Here is a 289-residue protein sequence, read N- to C-terminus: Protease HtpX homolog (289 aa).

Helical transmembrane passes span 8-28 (LALL…VIGG) and 29-49 (SSGL…SWYQ). His132 contacts Zn(2+). Glu133 is an active-site residue. His136 is a binding site for Zn(2+). Helical transmembrane passes span 151-171 (VAGA…FGGI) and 183-203 (LGVL…QLAI). Glu208 contributes to the Zn(2+) binding site.

This sequence belongs to the peptidase M48B family. Zn(2+) serves as cofactor.

It localises to the cell inner membrane. This is Protease HtpX homolog from Trichormus variabilis (strain ATCC 29413 / PCC 7937) (Anabaena variabilis).